A 75-amino-acid polypeptide reads, in one-letter code: Probable pilin MJ1469 (75 aa).

Residues 1–11 (MKPKKIISNKA) constitute a propeptide that is removed on maturation. The QXSXEXXXL signature appears at 12-20 (QISLELALL).

The N-terminus is cleaved by the prepilin peptidase EppA, which recognizes the class III signal sequence.

It is found in the secreted. Its subcellular location is the cell surface. The protein resides in the fimbrium. This Methanocaldococcus jannaschii (strain ATCC 43067 / DSM 2661 / JAL-1 / JCM 10045 / NBRC 100440) (Methanococcus jannaschii) protein is Probable pilin MJ1469.